Here is a 104-residue protein sequence, read N- to C-terminus: uncharacterized protein (104 aa).

Positions 1–18 (MGVEGMWNVFLFSLQVAA) are cleaved as a signal peptide. N-linked (GlcNAc...) asparagine; by host glycosylation is present at N27.

This is an uncharacterized protein from Fowl adenovirus A serotype 1 (strain CELO / Phelps) (FAdV-1).